A 259-amino-acid polypeptide reads, in one-letter code: Small ribosomal subunit protein uS2 (259 aa).

Residues 224-259 (GKQGEDDQQVAPAEDVAEEVSDESLQDLKNSVEGND) are disordered. The segment covering 238 to 248 (DVAEEVSDESL) has biased composition (acidic residues). A compositionally biased stretch (polar residues) spans 250 to 259 (DLKNSVEGND).

This sequence belongs to the universal ribosomal protein uS2 family.

This is Small ribosomal subunit protein uS2 from Limosilactobacillus fermentum (strain NBRC 3956 / LMG 18251) (Lactobacillus fermentum).